The chain runs to 58 residues: Large ribosomal subunit protein eL37 (58 aa).

Residues Cys-20, Cys-23, Cys-35, and Cys-38 each coordinate Zn(2+). Residues 20 to 38 form a C4-type zinc finger; the sequence is CRRCGEKSYHTKKKVCSSC.

This sequence belongs to the eukaryotic ribosomal protein eL37 family. It depends on Zn(2+) as a cofactor.

Binds to the 23S rRNA. The chain is Large ribosomal subunit protein eL37 from Haloquadratum walsbyi (strain DSM 16790 / HBSQ001).